The primary structure comprises 125 residues: Small ribosomal subunit protein uS12 (125 aa).

The interval 1–30 (MPTISQLVRKPRAAKPLKSKVPALGNSPQK) is disordered. The span at 9–18 (RKPRAAKPLK) shows a compositional bias: basic residues. 3-methylthioaspartic acid is present on aspartate 89. The interval 103–125 (DTAGVKDRKQGRSKYGAKKPKSA) is disordered. Over residues 113 to 125 (GRSKYGAKKPKSA) the composition is skewed to basic residues.

The protein belongs to the universal ribosomal protein uS12 family. As to quaternary structure, part of the 30S ribosomal subunit. Contacts proteins S8 and S17. May interact with IF1 in the 30S initiation complex.

With S4 and S5 plays an important role in translational accuracy. Its function is as follows. Interacts with and stabilizes bases of the 16S rRNA that are involved in tRNA selection in the A site and with the mRNA backbone. Located at the interface of the 30S and 50S subunits, it traverses the body of the 30S subunit contacting proteins on the other side and probably holding the rRNA structure together. The combined cluster of proteins S8, S12 and S17 appears to hold together the shoulder and platform of the 30S subunit. This is Small ribosomal subunit protein uS12 from Nitrosospira multiformis (strain ATCC 25196 / NCIMB 11849 / C 71).